Consider the following 119-residue polypeptide: Large ribosomal subunit protein bL19 (119 aa).

The protein belongs to the bacterial ribosomal protein bL19 family.

This protein is located at the 30S-50S ribosomal subunit interface and may play a role in the structure and function of the aminoacyl-tRNA binding site. The sequence is that of Large ribosomal subunit protein bL19 from Sulfurovum sp. (strain NBC37-1).